Reading from the N-terminus, the 79-residue chain is D-alanyl carrier protein (79 aa).

The Carrier domain maps to 2–79 (AEFKEQVLDI…MVIKKLEEIR (78 aa)). At Ser-37 the chain carries O-(pantetheine 4'-phosphoryl)serine.

The protein belongs to the DltC family. 4'-phosphopantetheine is transferred from CoA to a specific serine of apo-DCP.

The protein localises to the cytoplasm. It participates in cell wall biogenesis; lipoteichoic acid biosynthesis. Functionally, carrier protein involved in the D-alanylation of lipoteichoic acid (LTA). The loading of thioester-linked D-alanine onto DltC is catalyzed by D-alanine--D-alanyl carrier protein ligase DltA. The DltC-carried D-alanyl group is further transferred to cell membrane phosphatidylglycerol (PG) by forming an ester bond, probably catalyzed by DltD. D-alanylation of LTA plays an important role in modulating the properties of the cell wall in Gram-positive bacteria, influencing the net charge of the cell wall. The polypeptide is D-alanyl carrier protein (Bacillus anthracis (strain CDC 684 / NRRL 3495)).